Consider the following 139-residue polypeptide: Large ribosomal subunit protein uL16 (139 aa).

Residues 1–20 are compositionally biased toward basic residues; that stretch reads MLIPKRTKYRKQHRPVRRGM. Residues 1–21 are disordered; the sequence is MLIPKRTKYRKQHRPVRRGMS.

Belongs to the universal ribosomal protein uL16 family. As to quaternary structure, part of the 50S ribosomal subunit.

Binds 23S rRNA and is also seen to make contacts with the A and possibly P site tRNAs. This chain is Large ribosomal subunit protein uL16, found in Bifidobacterium adolescentis (strain ATCC 15703 / DSM 20083 / NCTC 11814 / E194a).